Here is a 309-residue protein sequence, read N- to C-terminus: Probable manganese-dependent inorganic pyrophosphatase (309 aa).

His-9, Asp-13, Asp-15, Asp-75, His-97, and Asp-149 together coordinate Mn(2+).

Belongs to the PPase class C family. Mn(2+) is required as a cofactor.

Its subcellular location is the cytoplasm. The catalysed reaction is diphosphate + H2O = 2 phosphate + H(+). The polypeptide is Probable manganese-dependent inorganic pyrophosphatase (Bacillus cereus (strain ATCC 10987 / NRS 248)).